A 429-amino-acid chain; its full sequence is Protein S-Myc (429 aa).

Tyr36 carries the phosphotyrosine; by Tyr-kinases modification. The interval 301 to 325 (PLPYAEDARPLKKPRSQDPLGPLKC) is disordered. Positions 346-398 (ERRRNHNRMERQRRDIMRSSFLNLRDLVPELVHNEKAAKVVILKKATEYIHTL) constitute a bHLH domain. The segment at 398 to 419 (LQTDESKLLVEREKLYERKQQL) is leucine-zipper.

In terms of assembly, efficient DNA binding requires dimerization with another bHLH protein.

It localises to the nucleus. In terms of biological role, has apoptosis-inducing activity. The protein is Protein S-Myc (Mycs) of Rattus norvegicus (Rat).